Here is a 543-residue protein sequence, read N- to C-terminus: Serine/threonine-protein kinase Chk2 (543 aa).

A disordered region spans residues 1–66; that stretch reads MSRESDVEAQ…SGTLSSLETV (66 aa). The span at 8–22 shows a compositional bias: polar residues; that stretch reads EAQQSHGSSACSQPH. The segment covering 23-62 has biased composition (low complexity); sequence GSVTQSQGSSSQSQGISSSSTSTMPNSSQSSHSSSGTLSS. A Phosphoserine; by PLK3 modification is found at serine 62. Residue threonine 68 is modified to Phosphothreonine; by ATM and MAP3K20. Serine 73 is subject to Phosphoserine; by PLK3. An FHA domain is found at 113–175; that stretch reads YWFGRDKSCE…NGTFVNTELV (63 aa). The Protein kinase domain maps to 220-486; the sequence is YIMSKTLGSG…TEEALRHPWL (267 aa). Residues 227–234, lysine 249, and 302–308 each bind ATP; these read GSGACGEV and ELMEGGE. The active-site Proton acceptor is the aspartate 347. ATP is bound by residues 351–352 and aspartate 368; that span reads EN. Positions 368–394 are T-loop/activation segment; sequence DFGHSKILGETSLMRTLCGTPTYLAPE. Serine 379 bears the Phosphoserine; by autocatalysis mark. Residues threonine 383 and threonine 387 each carry the phosphothreonine; by autocatalysis modification. At serine 456 the chain carries Phosphoserine. The segment covering 506–517 has biased composition (polar residues); that stretch reads TALPQVLAQPST. The segment at 506-538 is disordered; sequence TALPQVLAQPSTSRKRPREGEAEGAETTKRPAV. Basic and acidic residues predominate over residues 523–534; it reads REGEAEGAETTK.

Belongs to the protein kinase superfamily. CAMK Ser/Thr protein kinase family. CHK2 subfamily. Homodimer. Homodimerization is part of the activation process but the dimer may dissociate following activation. Interacts with PML. Interacts with TP53. Interacts with RB1; phosphorylates RB1. Interacts with BRCA1. Interacts (phosphorylated at Thr-68) with MDC1; requires ATM-mediated phosphorylation of CHEK2. Interacts with TP53BP1; modulates CHEK2 phosphorylation at Thr-68 in response to ionizing radiation. Interacts with CDC25A; phosphorylates CDC25A and mediates its degradation in response to ionizing radiation. Interacts with CUL1; mediates CHEK2 ubiquitination and regulation. Interacts with CDKN2AIP. Interacts (via protein kinase domain) with CCAR2 (via N-terminus). Interacts with SIRT1. Mg(2+) serves as cofactor. Post-translationally, phosphorylated. Phosphorylated at Ser-73 by PLK3 in response to DNA damage, promoting phosphorylation at Thr-68 by ATM and the G2/M transition checkpoint. Phosphorylation at Thr-68 induces homodimerization. Autophosphorylates at Thr-383 and Thr-387 in the T-loop/activation segment upon dimerization to become fully active and phosphorylate its substrates like for instance CDC25C. DNA damage-induced autophosphorylation at Ser-379 induces CUL1-mediated ubiquitination and regulates the pro-apoptotic function. Phosphorylation at Ser-456 also regulates ubiquitination. Phosphorylated by PLK4. Ubiquitinated. CUL1-mediated ubiquitination regulates the pro-apoptotic function. Ubiquitination may also regulate protein stability. Ubiquitinated by RNF8 via 'Lys-48'-linked ubiquitination. In terms of tissue distribution, high expression is found in testis, spleen, colon and peripheral blood leukocytes. Low expression is found in other tissues.

It localises to the nucleus. It is found in the PML body. The protein resides in the nucleoplasm. It carries out the reaction L-seryl-[protein] + ATP = O-phospho-L-seryl-[protein] + ADP + H(+). The enzyme catalyses L-threonyl-[protein] + ATP = O-phospho-L-threonyl-[protein] + ADP + H(+). With respect to regulation, activated through phosphorylation at Thr-68 by ATM in response to DNA double-strand breaks. Activation is modulated by several mediators including MDC1 and TP53BP1. Induces homodimerization with exchange of the T-loop/activation segment between protomers and transphosphorylation of the protomers. The autophosphorylated kinase dimer is fully active. Negatively regulated by PPM1D through dephosphorylation of Thr-68. In terms of biological role, serine/threonine-protein kinase which is required for checkpoint-mediated cell cycle arrest, activation of DNA repair and apoptosis in response to the presence of DNA double-strand breaks. May also negatively regulate cell cycle progression during unperturbed cell cycles. Following activation, phosphorylates numerous effectors preferentially at the consensus sequence [L-X-R-X-X-S/T]. Regulates cell cycle checkpoint arrest through phosphorylation of CDC25A, CDC25B and CDC25C, inhibiting their activity. Inhibition of CDC25 phosphatase activity leads to increased inhibitory tyrosine phosphorylation of CDK-cyclin complexes and blocks cell cycle progression. May also phosphorylate NEK6 which is involved in G2/M cell cycle arrest. Regulates DNA repair through phosphorylation of BRCA2, enhancing the association of RAD51 with chromatin which promotes DNA repair by homologous recombination. Also stimulates the transcription of genes involved in DNA repair (including BRCA2) through the phosphorylation and activation of the transcription factor FOXM1. Regulates apoptosis through the phosphorylation of p53/TP53, MDM4 and PML. Phosphorylation of p53/TP53 at 'Ser-20' by CHEK2 may alleviate inhibition by MDM2, leading to accumulation of active p53/TP53. Phosphorylation of MDM4 may also reduce degradation of p53/TP53. Also controls the transcription of pro-apoptotic genes through phosphorylation of the transcription factor E2F1. Tumor suppressor, it may also have a DNA damage-independent function in mitotic spindle assembly by phosphorylating BRCA1. Its absence may be a cause of the chromosomal instability observed in some cancer cells. Promotes the CCAR2-SIRT1 association and is required for CCAR2-mediated SIRT1 inhibition. Under oxidative stress, promotes ATG7 ubiquitination by phosphorylating the E3 ubiquitin ligase TRIM32 at 'Ser-55' leading to positive regulation of the autophagosme assembly. Functionally, (Microbial infection) Phosphorylates herpes simplex virus 1/HHV-1 protein ICP0 and thus activates its SUMO-targeted ubiquitin ligase activity. The protein is Serine/threonine-protein kinase Chk2 of Homo sapiens (Human).